A 156-amino-acid polypeptide reads, in one-letter code: Small ribosomal subunit protein uS7 (156 aa).

This sequence belongs to the universal ribosomal protein uS7 family. Part of the 30S ribosomal subunit. Contacts proteins S9 and S11.

One of the primary rRNA binding proteins, it binds directly to 16S rRNA where it nucleates assembly of the head domain of the 30S subunit. Is located at the subunit interface close to the decoding center, probably blocks exit of the E-site tRNA. The polypeptide is Small ribosomal subunit protein uS7 (Geobacter sulfurreducens (strain ATCC 51573 / DSM 12127 / PCA)).